The sequence spans 380 residues: Cytochrome b (380 aa).

The next 4 helical transmembrane spans lie at 33–53, 77–98, 113–133, and 178–198; these read FGSL…FLAM, WLIR…YLHI, WNVG…GYVL, and FFAF…LHLL. The heme b site is built by H83 and H97. The heme b site is built by H182 and H196. Residue H201 coordinates a ubiquinone. The next 4 membrane-spanning stretches (helical) occupy residues 226 to 246, 288 to 308, 320 to 340, and 347 to 367; these read YKDL…ALFS, LGGV…PFLH, ASQF…WIGG, and FIII…VLFP.

This sequence belongs to the cytochrome b family. In terms of assembly, the cytochrome bc1 complex contains 3 respiratory subunits (MT-CYB, CYC1 and UQCRFS1), 2 core proteins (UQCRC1 and UQCRC2) and probably 6 low-molecular weight proteins. Requires heme b as cofactor.

Its subcellular location is the mitochondrion inner membrane. Functionally, component of the ubiquinol-cytochrome c reductase complex (complex III or cytochrome b-c1 complex) that is part of the mitochondrial respiratory chain. The b-c1 complex mediates electron transfer from ubiquinol to cytochrome c. Contributes to the generation of a proton gradient across the mitochondrial membrane that is then used for ATP synthesis. This chain is Cytochrome b (mt-cyb), found in Scomber scombrus (Atlantic mackerel).